A 655-amino-acid chain; its full sequence is Alpha-L-iduronidase (655 aa).

The signal sequence occupies residues 1–25; that stretch reads MRPPGPRAPGLALLAALLAAPRALA. Positions 53, 55, and 57 each coordinate alpha-D-mannopyranose. Histidine 90 contacts alpha-L-iduronate. N-linked (GlcNAc...) asparagine glycosylation occurs at asparagine 109. Residues asparagine 180 and glutamate 181 each contribute to the alpha-L-iduronate site. Glutamate 181 acts as the Proton donor in catalysis. 2 N-linked (GlcNAc...) asparagine glycosylation sites follow: asparagine 189 and asparagine 242. Lysine 263, glutamate 298, and glycine 304 together coordinate alpha-L-iduronate. The active-site Nucleophile is the glutamate 298. An alpha-D-mannopyranose-binding site is contributed by tryptophan 305. An N-linked (GlcNAc...) asparagine glycan is attached at asparagine 335. Positions 348 and 362 each coordinate alpha-L-iduronate. Residues asparagine 371 and asparagine 414 are each glycosylated (N-linked (GlcNAc...) asparagine). A disulfide bridge connects residues cysteine 540 and cysteine 576.

It belongs to the glycosyl hydrolase 39 family. Monomer. Post-translationally, a smaller 63 kDa protein probably arises from IDUA protein by proteolytic cleavage. N-glycosylation contributes to substrate binding and is required for full enzymatic activity. As to expression, detected in testis (at protein level). Expressed ubiquitously.

It is found in the lysosome. The catalysed reaction is Hydrolysis of unsulfated alpha-L-iduronosidic linkages in dermatan sulfate.. This Canis lupus familiaris (Dog) protein is Alpha-L-iduronidase (IDUA).